The sequence spans 199 residues: MTRLLGYVDPLDPSFVAAVITITFNPLYWNVVARWEHKTRKLSRAFGSPYLACYSLSVTILLLNFLRSHCFTQAMLSQPRMESLDTPAAYSLGLALLGLGVVLVLSSFFALGFAGTFLGDYFGILKEARVTVFPFNILDNPMYWGSTANYLGWAIMHASPTGLLLTVLVALTYIVALLYEEPFTAEIYRQKASGSHKRS.

The Lumenal segment spans residues 1–12 (MTRLLGYVDPLD). Residues 13–33 (PSFVAAVITITFNPLYWNVVA) constitute an intramembrane region (helical). Topologically, residues 34-45 (RWEHKTRKLSRA) are lumenal. The helical transmembrane segment at 46–66 (FGSPYLACYSLSVTILLLNFL) threads the bilayer. The Cytoplasmic segment spans residues 67-93 (RSHCFTQAMLSQPRMESLDTPAAYSLG). The helical transmembrane segment at 94 to 114 (LALLGLGVVLVLSSFFALGFA) threads the bilayer. 98-100 (GLG) serves as a coordination point for S-adenosyl-L-methionine. Residues 115–157 (GTFLGDYFGILKEARVTVFPFNILDNPMYWGSTANYLGWAIMH) lie on the Lumenal side of the membrane. A helical membrane pass occupies residues 158-178 (ASPTGLLLTVLVALTYIVALL). Over 179 to 199 (YEEPFTAEIYRQKASGSHKRS) the chain is Cytoplasmic. 180–181 (EE) lines the S-adenosyl-L-methionine pocket.

Belongs to the class VI-like SAM-binding methyltransferase superfamily. PEMT/PEM2 methyltransferase family. In terms of processing, isoform 2 is N-glycosylated with high-mannose oligosaccharides. Primarily expressed in liver (at protein level).

The protein localises to the endoplasmic reticulum. It is found in the endoplasmic reticulum membrane. The protein resides in the mitochondrion membrane. The enzyme catalyses a 1,2-diacyl-sn-glycero-3-phospho-N-methylethanolamine + S-adenosyl-L-methionine = a 1,2-diacyl-sn-glycero-3-phospho-N,N-dimethylethanolamine + S-adenosyl-L-homocysteine + H(+). It catalyses the reaction a 1,2-diacyl-sn-glycero-3-phospho-N,N-dimethylethanolamine + S-adenosyl-L-methionine = a 1,2-diacyl-sn-glycero-3-phosphocholine + S-adenosyl-L-homocysteine + H(+). It carries out the reaction a 1,2-diacyl-sn-glycero-3-phosphoethanolamine + S-adenosyl-L-methionine = a 1,2-diacyl-sn-glycero-3-phospho-N-methylethanolamine + S-adenosyl-L-homocysteine + H(+). The catalysed reaction is 1,2-di-(9Z-octadecenoyl)-sn-glycero-3-phosphoethanolamine + S-adenosyl-L-methionine = 1,2-di-(9Z-octadecenoyl)-sn-glycero-3-phospho-N-methylethanolamine + S-adenosyl-L-homocysteine + H(+). The enzyme catalyses 1,2-di-(9Z-octadecenoyl)-sn-glycero-3-phospho-N-methylethanolamine + S-adenosyl-L-methionine = 1,2-di-(9Z-octadecenoyl)-sn-glycero-3-phospho-N,N-dimethylethanolamine + S-adenosyl-L-homocysteine + H(+). It catalyses the reaction 1,2-di-(9Z-octadecenoyl)-sn-glycero-3-phospho-N,N-dimethylethanolamine + S-adenosyl-L-methionine = 1,2-di-(9Z-octadecenoyl)-sn-glycero-3-phosphocholine + S-adenosyl-L-homocysteine + H(+). It carries out the reaction 1,2-di-(9Z,12Z-octadecadienoyl)-sn-glycero-3-phosphoethanolamine + S-adenosyl-L-methionine = 1,2-di-(9Z,12Z-octadecadienoyl)-sn-glycero-3-phospho-N-methylethanolamine + S-adenosyl-L-homocysteine + H(+). The catalysed reaction is 1,2-di-(9Z,12Z-octadecadienoyl)-sn-glycero-3-phospho-N-methylethanolamine + S-adenosyl-L-methionine = 1,2-di-(9Z,12Z-octadecadienoyl)-sn-glycero-3-phospho-N,N-dimethylethanolamine + S-adenosyl-L-homocysteine + H(+). The enzyme catalyses 1,2-di-(9Z,12Z-octadecadienoyl)-sn-glycero-3-phospho-N,N-dimethylethanolamine + S-adenosyl-L-methionine = 1,2-di-(9Z,12Z-octadecadienoyl)-sn-glycero-3-phosphocholine + S-adenosyl-L-homocysteine + H(+). It catalyses the reaction 1,2-di-(9Z,12Z,15Z-octadecatrienoyl)-sn-glycero-3-phosphoethanolamine + S-adenosyl-L-methionine = 1,2-di-(9Z,12Z,15Z-octadecatrienoyl)-sn-glycero-3-phospho-N-methylethanolamine + S-adenosyl-L-homocysteine + H(+). It carries out the reaction 1,2-di-(9Z,12Z,15Z-octadecatrienoyl)-sn-glycero-3-phospho-N-methylethanolamine + S-adenosyl-L-methionine = 1,2-di-(9Z,12Z,15Z-octadecatrienoyl)-sn-glycero-3-phospho-N,N-dimethylethanolamine + S-adenosyl-L-homocysteine + H(+). The catalysed reaction is 1,2-di-(9Z,12Z,15Z-octadecatrienoyl)-sn-glycero-3-phospho-N,N-dimethylethanolamine + S-adenosyl-L-methionine = 1,2-di-(9Z,12Z,15Z-octadecatrienoyl)-sn-glycero-3-phosphocholine + S-adenosyl-L-homocysteine + H(+). The enzyme catalyses 1-hexadecanoyl-2-(4Z,7Z,10Z,13Z,16Z,19Z-docosahexaenoyl)-sn-glycero-3-phosphoethanolamine + S-adenosyl-L-methionine = 1-hexadecanoyl-2-(4Z,7Z,10Z,13Z,16Z,19Z-docosahexaenoyl)-sn-glycero-3-phospho-N-methylethanolamine + S-adenosyl-L-homocysteine + H(+). It catalyses the reaction 1-hexadecanoyl-2-(4Z,7Z,10Z,13Z,16Z,19Z-docosahexaenoyl)-sn-glycero-3-phospho-N-methylethanolamine + S-adenosyl-L-methionine = 1-hexadecanoyl-2-(4Z,7Z,10Z,13Z,16Z,19Z-docosahexaenoyl)-sn-glycero-3-phospho-N,N-dimethylethanolamine + S-adenosyl-L-homocysteine + H(+). It carries out the reaction 1-hexadecanoyl-2-(4Z,7Z,10Z,13Z,16Z,19Z-docosahexaenoyl)-sn-glycero-3-phospho-N,N-dimethylethanolamine + S-adenosyl-L-methionine = 1-hexadecanoyl-2-(4Z,7Z,10Z,13Z,16Z,19Z-docosahexaenoyl)-sn-glycero-3-phosphocholine + S-adenosyl-L-homocysteine + H(+). It functions in the pathway phospholipid metabolism; phosphatidylcholine biosynthesis. With respect to regulation, the first methylation is rate-limiting. Catalyzes the three sequential steps of the methylation pathway for the biosynthesis of phosphatidylcholine, a critical and essential component for membrane structure. Uses S-adenosylmethionine (S-adenosyl-L-methionine, SAM or AdoMet) as the methyl group donor for the methylation of phosphatidylethanolamine (1,2-diacyl-sn-glycero-3-phosphoethanolamine, PE) to phosphatidylmonomethylethanolamine (1,2-diacyl-sn-glycero-3-phospho-N-methylethanolamine, PMME), PMME to phosphatidyldimethylethanolamine (1,2-diacyl-sn-glycero-3-phospho-N,N-dimethylethanolamine, PDME), and PDME to phosphatidylcholine (1,2-diacyl-sn-glycero-3-phosphocholine, PC), producing S-adenosyl-L-homocysteine in each step. Responsible for approximately 30% of hepatic PC with the CDP-choline pathway accounting for the other 70%. Its function is as follows. Catalyzes the three sequential steps of the methylation of 1,2-diacyl-sn-glycero-3-phospho-N-methylethanolamine (PMME) to 1,2-diacyl-sn-glycero-3-phospho-N,N-dimethylethanolamine (PDME) more efficiently than isoform 2. Induces increase in PC species with longer polyunsaturated chains than isoform 2. Functionally, produces a higher increase in the level of PC species containing long chains with three double bonds than isoform 1. The protein is Phosphatidylethanolamine N-methyltransferase of Homo sapiens (Human).